Here is a 342-residue protein sequence, read N- to C-terminus: Selenide, water dikinase (342 aa).

The active site involves cysteine 13. Residues lysine 16 and 44-46 each bind ATP; that span reads SCD. Aspartate 47 serves as a coordination point for Mg(2+). Residues aspartate 64, aspartate 87, and 134-136 each bind ATP; that span reads GHS. Aspartate 87 is a Mg(2+) binding site. Aspartate 222 is a binding site for Mg(2+).

Belongs to the selenophosphate synthase 1 family. Class I subfamily. Homodimer. It depends on Mg(2+) as a cofactor.

It carries out the reaction hydrogenselenide + ATP + H2O = selenophosphate + AMP + phosphate + 2 H(+). In terms of biological role, synthesizes selenophosphate from selenide and ATP. This chain is Selenide, water dikinase, found in Agathobacter rectalis (strain ATCC 33656 / DSM 3377 / JCM 17463 / KCTC 5835 / VPI 0990) (Eubacterium rectale).